The primary structure comprises 748 residues: Catalase-peroxidase (748 aa).

A cross-link (tryptophyl-tyrosyl-methioninium (Trp-Tyr) (with M-255)) is located at residues 96-229 (WHSAGTYRVA…LAAAHMGLIY (134 aa)). The active-site Proton acceptor is the His-97. Residues 229 to 255 (YVNPEGPDGNPDPIAAAKDIRTTFGRM) constitute a cross-link (tryptophyl-tyrosyl-methioninium (Tyr-Met) (with W-96)). Heme b is bound at residue His-270.

Belongs to the peroxidase family. Peroxidase/catalase subfamily. As to quaternary structure, homodimer or homotetramer. Heme b serves as cofactor. Post-translationally, formation of the three residue Trp-Tyr-Met cross-link is important for the catalase, but not the peroxidase activity of the enzyme.

The protein resides in the cytoplasm. It catalyses the reaction H2O2 + AH2 = A + 2 H2O. The enzyme catalyses 2 H2O2 = O2 + 2 H2O. Functionally, bifunctional enzyme with both catalase and broad-spectrum peroxidase activity. Plays a crucial role in oxidative stress response during infection. Acts as an antigen and elicits antibody response in P.marneffei-infected AIDS patients, healthy people working in mycological laboratory, and healthy people in an endemic area. This chain is Catalase-peroxidase, found in Talaromyces marneffei (Penicillium marneffei).